The following is a 337-amino-acid chain: Ycf66-like protein (337 aa).

Residues 111–337 (TEAELDQLEP…GADDQERFDY (227 aa)) form a disordered region. Positions 113-123 (AELDQLEPEDE) are enriched in acidic residues. Composition is skewed to basic and acidic residues over residues 133–143 (RGYDDDARSGR) and 253–269 (FGDR…RPYE). The span at 304-316 (QSRSGNPRSQRPS) shows a compositional bias: polar residues.

This sequence belongs to the ycf66 family.

This chain is Ycf66-like protein, found in Synechocystis sp. (strain ATCC 27184 / PCC 6803 / Kazusa).